We begin with the raw amino-acid sequence, 510 residues long: 2,3-bisphosphoglycerate-independent phosphoglycerate mutase (510 aa).

Residue Asp12 coordinates Mn(2+). A Phosphotyrosine modification is found at Tyr36. A Mn(2+)-binding site is contributed by Ser62. Residue Ser62 is the Phosphoserine intermediate of the active site. Substrate-binding positions include His123, 153-154 (RD), Arg185, Arg191, 261-264 (RPDR), and Lys336. Mn(2+) contacts are provided by Asp403, His407, Asp444, His445, and His462.

This sequence belongs to the BPG-independent phosphoglycerate mutase family. As to quaternary structure, monomer. The cofactor is Mn(2+).

The enzyme catalyses (2R)-2-phosphoglycerate = (2R)-3-phosphoglycerate. The protein operates within carbohydrate degradation; glycolysis; pyruvate from D-glyceraldehyde 3-phosphate: step 3/5. Its function is as follows. Essential for rapid growth and for sporulation. Catalyzes the interconversion of 2-phosphoglycerate and 3-phosphoglycerate. This Halalkalibacterium halodurans (strain ATCC BAA-125 / DSM 18197 / FERM 7344 / JCM 9153 / C-125) (Bacillus halodurans) protein is 2,3-bisphosphoglycerate-independent phosphoglycerate mutase.